Consider the following 632-residue polypeptide: DNA mismatch repair protein MutL (632 aa).

The interval 376–397 (EQPQAEPRQSFTPGSGAGSGYQ) is disordered.

Belongs to the DNA mismatch repair MutL/HexB family.

This protein is involved in the repair of mismatches in DNA. It is required for dam-dependent methyl-directed DNA mismatch repair. May act as a 'molecular matchmaker', a protein that promotes the formation of a stable complex between two or more DNA-binding proteins in an ATP-dependent manner without itself being part of a final effector complex. The chain is DNA mismatch repair protein MutL from Pseudomonas entomophila (strain L48).